The primary structure comprises 209 residues: Uracil phosphoribosyltransferase (209 aa).

5-phospho-alpha-D-ribose 1-diphosphate is bound by residues Arg79, Arg104, and Asp131–Ser139. Uracil contacts are provided by residues Ile194 and Gly199–Ala201. Asp200 is a 5-phospho-alpha-D-ribose 1-diphosphate binding site.

Belongs to the UPRTase family. Mg(2+) is required as a cofactor.

It carries out the reaction UMP + diphosphate = 5-phospho-alpha-D-ribose 1-diphosphate + uracil. Its pathway is pyrimidine metabolism; UMP biosynthesis via salvage pathway; UMP from uracil: step 1/1. Its activity is regulated as follows. Allosterically activated by GTP. Functionally, catalyzes the conversion of uracil and 5-phospho-alpha-D-ribose 1-diphosphate (PRPP) to UMP and diphosphate. The sequence is that of Uracil phosphoribosyltransferase from Streptococcus sanguinis (strain SK36).